The following is a 309-amino-acid chain: HPr kinase/phosphorylase (309 aa).

Active-site residues include His138 and Lys159. 153-160 (GDSGIGKS) is a binding site for ATP. Mg(2+) is bound at residue Ser160. Asp177 functions as the Proton acceptor; for phosphorylation activity. Proton donor; for dephosphorylation activity in the catalytic mechanism. The interval 201–210 (LEIRGVGIID) is important for the catalytic mechanism of both phosphorylation and dephosphorylation. Glu202 is a binding site for Mg(2+). Arg243 is a catalytic residue. The segment at 264–269 (PVKTGR) is important for the catalytic mechanism of dephosphorylation.

It belongs to the HPrK/P family. In terms of assembly, homohexamer. Mg(2+) is required as a cofactor.

It catalyses the reaction [HPr protein]-L-serine + ATP = [HPr protein]-O-phospho-L-serine + ADP + H(+). The enzyme catalyses [HPr protein]-O-phospho-L-serine + phosphate + H(+) = [HPr protein]-L-serine + diphosphate. Functionally, catalyzes the ATP- as well as the pyrophosphate-dependent phosphorylation of a specific serine residue in HPr, a phosphocarrier protein of the phosphoenolpyruvate-dependent sugar phosphotransferase system (PTS). HprK/P also catalyzes the pyrophosphate-producing, inorganic phosphate-dependent dephosphorylation (phosphorolysis) of seryl-phosphorylated HPr (P-Ser-HPr). The two antagonistic activities of HprK/P are regulated by several intracellular metabolites, which change their concentration in response to the absence or presence of rapidly metabolisable carbon sources (glucose, fructose, etc.) in the growth medium. Therefore, by controlling the phosphorylation state of HPr, HPrK/P is a sensor enzyme that plays a major role in the regulation of carbon metabolism and sugar transport: it mediates carbon catabolite repression (CCR), and regulates PTS-catalyzed carbohydrate uptake and inducer exclusion. This is HPr kinase/phosphorylase from Streptococcus thermophilus (strain CNRZ 1066).